The following is a 508-amino-acid chain: Photosystem II CP47 reaction center protein (508 aa).

The next 6 membrane-spanning stretches (helical) occupy residues 21–36 (SVHI…WAGS), 101–115 (IVFS…IWHW), 140–156 (GIHL…FGAF), 203–218 (IAAG…FHLS), 237–252 (VLSS…AFVV), and 457–472 (TFAL…HGAR).

Belongs to the PsbB/PsbC family. PsbB subfamily. In terms of assembly, PSII is composed of 1 copy each of membrane proteins PsbA, PsbB, PsbC, PsbD, PsbE, PsbF, PsbH, PsbI, PsbJ, PsbK, PsbL, PsbM, PsbT, PsbX, PsbY, PsbZ, Psb30/Ycf12, at least 3 peripheral proteins of the oxygen-evolving complex and a large number of cofactors. It forms dimeric complexes. The cofactor is Binds multiple chlorophylls. PSII binds additional chlorophylls, carotenoids and specific lipids..

It localises to the plastid. The protein localises to the chloroplast thylakoid membrane. In terms of biological role, one of the components of the core complex of photosystem II (PSII). It binds chlorophyll and helps catalyze the primary light-induced photochemical processes of PSII. PSII is a light-driven water:plastoquinone oxidoreductase, using light energy to abstract electrons from H(2)O, generating O(2) and a proton gradient subsequently used for ATP formation. This is Photosystem II CP47 reaction center protein from Drimys granadensis.